A 67-amino-acid polypeptide reads, in one-letter code: Small ribosomal subunit protein bS21 (67 aa).

This sequence belongs to the bacterial ribosomal protein bS21 family.

The chain is Small ribosomal subunit protein bS21 from Nitratidesulfovibrio vulgaris (strain DP4) (Desulfovibrio vulgaris).